A 592-amino-acid chain; its full sequence is Aspartate--tRNA ligase (592 aa).

Position 171 (E171) interacts with L-aspartate. Positions Q195–K198 are aspartate. R217 lines the L-aspartate pocket. Residues R217–E219 and Q226 each bind ATP. L-aspartate is bound at residue H448. E482 contributes to the ATP binding site. Position 489 (R489) interacts with L-aspartate. G534–R537 provides a ligand contact to ATP.

The protein belongs to the class-II aminoacyl-tRNA synthetase family. Type 1 subfamily. Homodimer.

The protein localises to the cytoplasm. It catalyses the reaction tRNA(Asp) + L-aspartate + ATP = L-aspartyl-tRNA(Asp) + AMP + diphosphate. Functionally, catalyzes the attachment of L-aspartate to tRNA(Asp) in a two-step reaction: L-aspartate is first activated by ATP to form Asp-AMP and then transferred to the acceptor end of tRNA(Asp). The sequence is that of Aspartate--tRNA ligase from Vibrio parahaemolyticus serotype O3:K6 (strain RIMD 2210633).